A 430-amino-acid polypeptide reads, in one-letter code: Serine--tRNA ligase (430 aa).

237-239 lines the L-serine pocket; the sequence is TAE. 268-270 serves as a coordination point for ATP; the sequence is RSE. L-serine is bound at residue Glu-291. 355–358 contributes to the ATP binding site; that stretch reads EISS. Residue Ser-391 coordinates L-serine.

Belongs to the class-II aminoacyl-tRNA synthetase family. Type-1 seryl-tRNA synthetase subfamily. Homodimer. The tRNA molecule binds across the dimer.

The protein localises to the cytoplasm. The enzyme catalyses tRNA(Ser) + L-serine + ATP = L-seryl-tRNA(Ser) + AMP + diphosphate + H(+). The catalysed reaction is tRNA(Sec) + L-serine + ATP = L-seryl-tRNA(Sec) + AMP + diphosphate + H(+). It participates in aminoacyl-tRNA biosynthesis; selenocysteinyl-tRNA(Sec) biosynthesis; L-seryl-tRNA(Sec) from L-serine and tRNA(Sec): step 1/1. Its function is as follows. Catalyzes the attachment of serine to tRNA(Ser). Is also able to aminoacylate tRNA(Sec) with serine, to form the misacylated tRNA L-seryl-tRNA(Sec), which will be further converted into selenocysteinyl-tRNA(Sec). This Yersinia pseudotuberculosis serotype O:1b (strain IP 31758) protein is Serine--tRNA ligase.